The chain runs to 713 residues: Protein tyrosine phosphatase domain-containing protein 1 (713 aa).

A Tyrosine-protein phosphatase domain is found at 80 to 251 (YSSWITDHLL…LVPLRSVFSC (172 aa)). Cys-188 acts as the Phosphocysteine intermediate in catalysis.

It belongs to the protein-tyrosine phosphatase family. Non-receptor class PTPDC1 subfamily.

May play roles in cilia formation and/or maintenance. This chain is Protein tyrosine phosphatase domain-containing protein 1 (ptpdc1), found in Danio rerio (Zebrafish).